A 26-amino-acid chain; its full sequence is Oxyopinin-3b (26 aa).

In terms of tissue distribution, expressed by the venom gland.

The protein localises to the secreted. May have cytolytic and antimicrobial activity. This chain is Oxyopinin-3b, found in Oxyopes takobius (Lynx spider).